The following is a 484-amino-acid chain: Protein nucleotidyltransferase YdiU (484 aa).

Positions 87, 89, 90, 110, 122, 123, 173, and 180 each coordinate ATP. The active-site Proton acceptor is the D249. N250 and D259 together coordinate Mg(2+). D259 lines the ATP pocket.

It belongs to the SELO family. It depends on Mg(2+) as a cofactor. Mn(2+) is required as a cofactor.

The enzyme catalyses L-seryl-[protein] + ATP = 3-O-(5'-adenylyl)-L-seryl-[protein] + diphosphate. It carries out the reaction L-threonyl-[protein] + ATP = 3-O-(5'-adenylyl)-L-threonyl-[protein] + diphosphate. The catalysed reaction is L-tyrosyl-[protein] + ATP = O-(5'-adenylyl)-L-tyrosyl-[protein] + diphosphate. It catalyses the reaction L-histidyl-[protein] + UTP = N(tele)-(5'-uridylyl)-L-histidyl-[protein] + diphosphate. The enzyme catalyses L-seryl-[protein] + UTP = O-(5'-uridylyl)-L-seryl-[protein] + diphosphate. It carries out the reaction L-tyrosyl-[protein] + UTP = O-(5'-uridylyl)-L-tyrosyl-[protein] + diphosphate. In terms of biological role, nucleotidyltransferase involved in the post-translational modification of proteins. It can catalyze the addition of adenosine monophosphate (AMP) or uridine monophosphate (UMP) to a protein, resulting in modifications known as AMPylation and UMPylation. In Alcanivorax borkumensis (strain ATCC 700651 / DSM 11573 / NCIMB 13689 / SK2), this protein is Protein nucleotidyltransferase YdiU.